The chain runs to 268 residues: 4-hydroxy-tetrahydrodipicolinate reductase (268 aa).

NAD(+)-binding positions include 10 to 15 (GSTGRM), glutamate 36, 99 to 101 (GTT), and 123 to 126 (APNM). The active-site Proton donor/acceptor is the histidine 156. Residue histidine 157 coordinates (S)-2,3,4,5-tetrahydrodipicolinate. The Proton donor role is filled by lysine 160. 166–167 (GT) contacts (S)-2,3,4,5-tetrahydrodipicolinate.

It belongs to the DapB family.

The protein resides in the cytoplasm. It catalyses the reaction (S)-2,3,4,5-tetrahydrodipicolinate + NAD(+) + H2O = (2S,4S)-4-hydroxy-2,3,4,5-tetrahydrodipicolinate + NADH + H(+). It carries out the reaction (S)-2,3,4,5-tetrahydrodipicolinate + NADP(+) + H2O = (2S,4S)-4-hydroxy-2,3,4,5-tetrahydrodipicolinate + NADPH + H(+). It functions in the pathway amino-acid biosynthesis; L-lysine biosynthesis via DAP pathway; (S)-tetrahydrodipicolinate from L-aspartate: step 4/4. Functionally, catalyzes the conversion of 4-hydroxy-tetrahydrodipicolinate (HTPA) to tetrahydrodipicolinate. The chain is 4-hydroxy-tetrahydrodipicolinate reductase from Nitrosomonas europaea (strain ATCC 19718 / CIP 103999 / KCTC 2705 / NBRC 14298).